We begin with the raw amino-acid sequence, 542 residues long: uncharacterized protein (542 aa).

Residues 256–275 form a disordered region; the sequence is KKSTTTSSPPITTTHLSKPE. Over residues 258–269 the composition is skewed to low complexity; that stretch reads STTTSSPPITTT.

This is an uncharacterized protein from Caenorhabditis elegans.